The sequence spans 392 residues: Protein SRL2 (392 aa).

The residue at position 11 (Ser11) is a Phosphoserine. A disordered region spans residues 18–52 (KPSETPKMEEEKLEVTNVNASSSKKVHKSKKSTSK). Residues 21–31 (ETPKMEEEKLE) show a composition bias toward basic and acidic residues. Positions 41 to 50 (KKVHKSKKST) are enriched in basic residues. Phosphoserine is present on Ser139. Residues 284 to 303 (EDSTAVTNENGHISSEKNLK) are disordered. Positions 287–296 (TAVTNENGHI) are enriched in polar residues.

It localises to the cytoplasm. Its subcellular location is the nucleus. This chain is Protein SRL2 (SRL2), found in Saccharomyces cerevisiae (strain ATCC 204508 / S288c) (Baker's yeast).